Reading from the N-terminus, the 276-residue chain is Tyrosinase (276 aa).

Residues His38, His56, His66, His193, His197, and His219 each coordinate Cu cation.

It belongs to the tyrosinase family. Cu(2+) serves as cofactor.

The catalysed reaction is 2 L-dopa + O2 = 2 L-dopaquinone + 2 H2O. It carries out the reaction L-tyrosine + O2 = L-dopaquinone + H2O. In terms of biological role, this is a copper-containing oxidase that functions in the formation of pigments such as melanins and other polyphenolic compounds. This Streptomyces galbus protein is Tyrosinase (melC2).